We begin with the raw amino-acid sequence, 679 residues long: Protein hook (679 aa).

Residues 1-155 are interaction with microtubules; it reads MSAPKNEMYY…NIMRALQELE (155 aa). Positions 6 to 123 constitute a Calponin-homology (CH) domain; the sequence is NEMYYSLLEW…RLLQLVLGCA (118 aa). Coiled coils occupy residues 135–437 and 480–574; these read EIMC…LKCG and QTAL…QEIL.

This sequence belongs to the hook family. As to quaternary structure, homodimer. Interacts with microtubules via its N-terminus.

It is found in the cytoplasm. It localises to the cytoskeleton. Its subcellular location is the endosome. The protein resides in the synapse. Functionally, involved in endocytic trafficking by stabilizing organelles of the endocytic pathway. Probably acts as a cytoskeletal linker protein required to tether endosome vesicles to the cytoskeleton. Involved in modulation of endocytosis at stages required for down-regulation of membrane proteins that control synapse size. Not involved in synaptic vesicle recycling. Required in R7 cells for boss endocytosis into multivesicular bodies (MVBs). Has a role in regulating adult longevity. This chain is Protein hook, found in Drosophila melanogaster (Fruit fly).